The sequence spans 111 residues: UPF0122 protein YofM (111 aa).

This sequence belongs to the UPF0122 family.

Might take part in the signal recognition particle (SRP) pathway. This is inferred from the conservation of its genetic proximity to ftsY/ffh. May be a regulatory protein. In Lactococcus lactis subsp. lactis (strain IL1403) (Streptococcus lactis), this protein is UPF0122 protein YofM (yofM).